A 624-amino-acid polypeptide reads, in one-letter code: Steryl-sulfatase (624 aa).

The N-terminal stretch at 1–22 (MPRPRPLLLAVMAATLADIILA) is a signal peptide. Residues 24 to 192 (DPAPAGPAPR…GTVFGPALRV (169 aa)) lie on the Lumenal side of the membrane. Asp-43 and Asp-44 together coordinate Ca(2+). Asn-55 carries N-linked (GlcNAc...) asparagine glycosylation. Cys-83 contacts Ca(2+). The active-site Nucleophile is the Cys-83. Cys-83 carries the post-translational modification 3-oxoalanine (Cys). His-144 is an active-site residue. 2 cysteine pairs are disulfide-bonded: Cys-149–Cys-156 and Cys-178–Cys-250. A helical transmembrane segment spans residues 193–216 (FAAGPLAALGASLAAMAAARWAGL). The Cytoplasmic segment spans residues 217–220 (ARVP). Residues 221 to 242 (GWALAGTAAAMLAVGGPRSASC) form a helical membrane-spanning segment. Residues 243 to 624 (LGFRPANCFL…ATTRTQATPR (382 aa)) are Lumenal-facing. Positions 350 and 351 each coordinate Ca(2+). Cystine bridges form between Cys-454/Cys-495 and Cys-487/Cys-493. An N-linked (GlcNAc...) asparagine glycan is attached at Asn-465. Residues 572–624 (GGAGGGAGAQDDSGHAHGDGSHAHDDPGHAQDRGDDDAHYGGHATTRTQATPR) form a disordered region. Residues 583–611 (DSGHAHGDGSHAHDDPGHAQDRGDDDAHY) show a composition bias toward basic and acidic residues.

This sequence belongs to the sulfatase family. In terms of assembly, homodimer. Ca(2+) serves as cofactor. Post-translationally, the conversion to 3-oxoalanine (also known as C-formylglycine, FGly), of a serine or cysteine residue in prokaryotes and of a cysteine residue in eukaryotes, is critical for catalytic activity.

The protein resides in the microsome membrane. The protein localises to the endoplasmic reticulum membrane. It carries out the reaction dehydroepiandrosterone 3-sulfate + H2O = 3beta-hydroxyandrost-5-en-17-one + sulfate + H(+). It catalyses the reaction estrone 3-sulfate + H2O = estrone + sulfate + H(+). Catalyzes the conversion of sulfated steroid precursors, such as dehydroepiandrosterone sulfate (DHEA-S) and estrone sulfate to the free steroid. This Mus musculus (Mouse) protein is Steryl-sulfatase (Sts).